Reading from the N-terminus, the 248-residue chain is Putative imidazole glycerol phosphate synthase subunit hisF2 (248 aa).

Asp-129 is a catalytic residue.

It belongs to the HisA/HisF family. As to quaternary structure, heterodimer of HisH and HisF.

It is found in the cytoplasm. The enzyme catalyses 5-[(5-phospho-1-deoxy-D-ribulos-1-ylimino)methylamino]-1-(5-phospho-beta-D-ribosyl)imidazole-4-carboxamide + L-glutamine = D-erythro-1-(imidazol-4-yl)glycerol 3-phosphate + 5-amino-1-(5-phospho-beta-D-ribosyl)imidazole-4-carboxamide + L-glutamate + H(+). It functions in the pathway amino-acid biosynthesis; L-histidine biosynthesis; L-histidine from 5-phospho-alpha-D-ribose 1-diphosphate: step 5/9. Its function is as follows. IGPS catalyzes the conversion of PRFAR and glutamine to IGP, AICAR and glutamate. The HisF subunit catalyzes the cyclization activity that produces IGP and AICAR from PRFAR using the ammonia provided by the HisH subunit. The polypeptide is Putative imidazole glycerol phosphate synthase subunit hisF2 (hisF2) (Campylobacter jejuni subsp. jejuni serotype O:2 (strain ATCC 700819 / NCTC 11168)).